A 585-amino-acid chain; its full sequence is MAGUK p55 subfamily member 3 (585 aa).

L27 domains lie at 6 to 60 (EDSG…ERQS) and 61 to 118 (PTPV…FDPV). The PDZ domain occupies 137–212 (IVRLVKNKEP…LAQSQGSITL (76 aa)). The SH3 domain maps to 226–296 (ESKVFMRALF…PSKGFQERRL (71 aa)). S307 carries the phosphoserine modification. One can recognise a Guanylate kinase-like domain in the interval 385–570 (PRLVVLIGSL…AYSQLKVVLE (186 aa)).

The protein belongs to the MAGUK family. Interacts with HTR2C; this interaction stabilizes the receptor at the plasma membrane and prevents the desensitization of the HTR2C receptor-mediated calcium response. Interacts with HTR2A. Interacts with HTR4. Interacts (via PDZ domain) with CADM1 (via C-terminus)Interacts (via PDZ domain) with CADM1; this interaction connects CADM1 with DLG1. Interacts (via Guanylate kinase-like domain) with PALS1. Interacts with DLG1 (via N-terminus); this interaction connects CADM1 with DLG1 and links CADM1 with the regulatory subunit of phosphoinositide-3-kinase (PI3K) by forming a multiprotein complex and participates in cell spreading. Expressed in retina (at protein level) at the subapical region (SAR) adjacent to adherens junctions at the OLM, and at the OPL.

Its subcellular location is the cell membrane. It localises to the apical cell membrane. It is found in the cell junction. The protein localises to the adherens junction. Participates in cell spreading through the phosphoinositide-3-kinase (PI3K) pathway by connecting CADM1 to DLG1 and the regulatory subunit of phosphoinositide-3-kinase (PI3K). Stabilizes HTR2C at the plasma membrane and prevents its desensitization. May participates in the maintenance of adherens junctions. The sequence is that of MAGUK p55 subfamily member 3 from Homo sapiens (Human).